A 431-amino-acid polypeptide reads, in one-letter code: Elongation factor 1-gamma (431 aa).

One can recognise a GST N-terminal domain in the interval 2–84 (VKGTLYTYPE…LLANEQLRGG (83 aa)). The 127-residue stretch at 86–212 (CPFVQAQVQQ…YKLCEKALVF (127 aa)) folds into the GST C-terminal domain. The interval 223-261 (KTGAAKPQQQAQQQKQEKKPKEKKEAPKKAAEPAEELDA) is disordered. Residues 226 to 236 (AAKPQQQAQQQ) show a composition bias toward low complexity. Residues 237 to 254 (KQEKKPKEKKEAPKKAAE) show a composition bias toward basic and acidic residues. One can recognise an EF-1-gamma C-terminal domain in the interval 272–431 (SKDPFDALPK…RKFNQGKIFK (160 aa)). Ser-294 is subject to Phosphoserine.

In terms of assembly, interacts with microtubules. May interact with BicDR; the interaction is probably indirect. Interacts (via C-terminus) with Doa; the interaction is probably direct, is transient and leads to phosphorylation of eEF1gamma by Doa. EF-1 is composed of four subunits: alpha, beta, delta, and gamma. In terms of processing, phosphorylated on Ser-294 by LAMMER kinases, including Doa. Phosphorylation on Ser-294 by Doa is required for negative regulation of microtubule-based transport.

It localises to the cytoplasm. The protein localises to the nucleus. Its subcellular location is the cytoskeleton. Microtubule binding protein involved in regulation of microtubule-based transport. Probably plays a role in anchoring the EF-1 complex to other cellular components. Probably involved in formation and/or development of mechanosensory organs during metamorphosis. Required for cellular and organismal viability. Not essential for the innate immune response to bacterial infection. The polypeptide is Elongation factor 1-gamma (Drosophila melanogaster (Fruit fly)).